A 409-amino-acid polypeptide reads, in one-letter code: Elongation factor Tu, chloroplastic (409 aa).

Residues 10-214 (KPHVNIGTIG…NVDSYIPTPA (205 aa)) enclose the tr-type G domain. The G1 stretch occupies residues 19–26 (GHVDHGKT). 19 to 26 (GHVDHGKT) contributes to the GTP binding site. Thr-26 serves as a coordination point for Mg(2+). The G2 stretch occupies residues 60-64 (GITIN). Residues 81 to 84 (DCPG) are G3. Residues 81 to 85 (DCPGH) and 136 to 139 (NKED) contribute to the GTP site. Positions 136–139 (NKED) are G4. The segment at 174-176 (SAL) is G5.

It belongs to the TRAFAC class translation factor GTPase superfamily. Classic translation factor GTPase family. EF-Tu/EF-1A subfamily.

It localises to the plastid. The protein resides in the chloroplast. It carries out the reaction GTP + H2O = GDP + phosphate + H(+). In terms of biological role, GTP hydrolase that promotes the GTP-dependent binding of aminoacyl-tRNA to the A-site of ribosomes during protein biosynthesis. The sequence is that of Elongation factor Tu, chloroplastic (tufA) from Ostreococcus tauri.